A 276-amino-acid chain; its full sequence is Sulfur carrier protein FdhD (276 aa).

The Cysteine persulfide intermediate role is filled by Cys-122. Residue 259-264 participates in Mo-bis(molybdopterin guanine dinucleotide) binding; the sequence is FCKPGK.

Belongs to the FdhD family.

The protein localises to the cytoplasm. Its function is as follows. Required for formate dehydrogenase (FDH) activity. Acts as a sulfur carrier protein that transfers sulfur from IscS to the molybdenum cofactor prior to its insertion into FDH. This is Sulfur carrier protein FdhD from Photorhabdus laumondii subsp. laumondii (strain DSM 15139 / CIP 105565 / TT01) (Photorhabdus luminescens subsp. laumondii).